The primary structure comprises 853 residues: Aminotransferase PigE (853 aa).

503 to 504 (GT) contributes to the pyridoxal 5'-phosphate binding site. The residue at position 645 (lysine 645) is an N6-(pyridoxal phosphate)lysine. Position 680 (threonine 680) interacts with pyridoxal 5'-phosphate.

This sequence belongs to the class-III pyridoxal-phosphate-dependent aminotransferase family. As to quaternary structure, homodimer. Pyridoxal 5'-phosphate is required as a cofactor.

Its pathway is antibiotic biosynthesis; prodigiosin biosynthesis. Its function is as follows. Involved in the biosynthesis of 2-methyl-3-n-amyl-pyrrole (MAP), one of the terminal products involved in the biosynthesis of the red antibiotic prodigiosin (Pig). Catalyzes the transamination to the aldehyde group of 3-acetyloctanal, resulting in an aminoketone, which spontaneously cyclizes to yield the dihydro form of MAP (H2MAP). This Serratia sp. (strain ATCC 39006) (Prodigiosinella confusarubida) protein is Aminotransferase PigE.